Consider the following 216-residue polypeptide: Probable nicotinate-nucleotide adenylyltransferase (216 aa).

It belongs to the NadD family.

The catalysed reaction is nicotinate beta-D-ribonucleotide + ATP + H(+) = deamido-NAD(+) + diphosphate. Its pathway is cofactor biosynthesis; NAD(+) biosynthesis; deamido-NAD(+) from nicotinate D-ribonucleotide: step 1/1. Catalyzes the reversible adenylation of nicotinate mononucleotide (NaMN) to nicotinic acid adenine dinucleotide (NaAD). This Geotalea uraniireducens (strain Rf4) (Geobacter uraniireducens) protein is Probable nicotinate-nucleotide adenylyltransferase.